The primary structure comprises 451 residues: Methylenetetrahydrofolate--tRNA-(uracil-5-)-methyltransferase TrmFO (451 aa).

10-15 (GGGLAG) lines the FAD pocket.

This sequence belongs to the MnmG family. TrmFO subfamily. FAD serves as cofactor.

It is found in the cytoplasm. It carries out the reaction uridine(54) in tRNA + (6R)-5,10-methylene-5,6,7,8-tetrahydrofolate + NADH + H(+) = 5-methyluridine(54) in tRNA + (6S)-5,6,7,8-tetrahydrofolate + NAD(+). The catalysed reaction is uridine(54) in tRNA + (6R)-5,10-methylene-5,6,7,8-tetrahydrofolate + NADPH + H(+) = 5-methyluridine(54) in tRNA + (6S)-5,6,7,8-tetrahydrofolate + NADP(+). Its function is as follows. Catalyzes the folate-dependent formation of 5-methyl-uridine at position 54 (M-5-U54) in all tRNAs. The protein is Methylenetetrahydrofolate--tRNA-(uracil-5-)-methyltransferase TrmFO of Anaeromyxobacter sp. (strain Fw109-5).